Reading from the N-terminus, the 205-residue chain is Small ribosomal subunit protein uS4 (205 aa).

A disordered region spans residues 26-46 (PVNRREYGPGQHGQRRKQKPS). Residues 94-157 (RRLDAVVYRL…KQLAIVLDAV (64 aa)) enclose the S4 RNA-binding domain.

It belongs to the universal ribosomal protein uS4 family. Part of the 30S ribosomal subunit. Contacts protein S5. The interaction surface between S4 and S5 is involved in control of translational fidelity.

Its function is as follows. One of the primary rRNA binding proteins, it binds directly to 16S rRNA where it nucleates assembly of the body of the 30S subunit. In terms of biological role, with S5 and S12 plays an important role in translational accuracy. This is Small ribosomal subunit protein uS4 from Gluconobacter oxydans (strain 621H) (Gluconobacter suboxydans).